A 292-amino-acid chain; its full sequence is Cyclin-dependent kinase 5 (292 aa).

One can recognise a Protein kinase domain in the interval Tyr-4–Phe-286. ATP-binding positions include Ile-10 to Val-18 and Lys-33. Tyr-15 is modified (phosphotyrosine; by ABL1, EPHA4 and FYN). Thr-17 is modified (phosphothreonine). N6-acetyllysine is present on Lys-56. Ser-72 bears the Phosphoserine mark. Residue Asp-126 is the Proton acceptor of the active site. The residue at position 159 (Ser-159) is a Phosphoserine.

This sequence belongs to the protein kinase superfamily. CMGC Ser/Thr protein kinase family. CDC2/CDKX subfamily. As to quaternary structure, heterodimer composed of a catalytic subunit CDK5 and a regulatory subunit CDK5R1 (p25) and macromolecular complex composed of at least CDK5, CDK5R1 (p35) and CDK5RAP1 or CDK5RAP2 or CDK5RAP3. Only the heterodimer shows kinase activity. Under neurotoxic stress and neuronal injury conditions, p35 is cleaved by calpain to generate p25 that hyperactivates CDK5, that becomes functionally disabled and often toxic. Found in a trimolecular complex with CABLES1 and ABL1. Interacts with CABLES1 and CABLES2. Interacts with AATK and GSTP1. Binds to HDAC1 when in complex with p25. Interaction with myristoylation p35 promotes CDK5 association with membranes. Both isoforms 1 and 2 interacts with beta-catenin/CTNNB1. Interacts with delta-catenin/CTNND2 and APEX1. Interacts with P53/TP53 in neurons. Interacts with PTK2/FAK1. Interacts with EPHA4; may mediate the activation of NGEF by EPHA4. The complex p35/CDK5 interacts with CLOCK. Interacts with HTR6. In terms of processing, phosphorylation on Tyr-15 by ABL1 and FYN, and on Ser-159 by casein kinase 1 promotes kinase activity. By contrast, phosphorylation at Thr-14 inhibits activity. Post-translationally, phosphorylation at Ser-159 is essential for maximal catalytic activity. Expressed in hippocampal neuronal synaptic termini (at protein level). Expressed predominantly in post-mitotic neurons of the central and peripheral nervous system.

Its subcellular location is the cytoplasm. The protein resides in the nucleus. The protein localises to the cell membrane. It is found in the perikaryon. It localises to the cell projection. Its subcellular location is the lamellipodium. The protein resides in the growth cone. The protein localises to the postsynaptic density. It is found in the synapse. The catalysed reaction is L-seryl-[protein] + ATP = O-phospho-L-seryl-[protein] + ADP + H(+). It catalyses the reaction L-threonyl-[protein] + ATP = O-phospho-L-threonyl-[protein] + ADP + H(+). With respect to regulation, inhibited by 2-(1-ethyl-2-hydroxyethylamino)-6-benzylamino-9-isopropylpurine (roscovitine), 1-isopropyl-4-aminobenzyl-6-ether-linked benzimidazoles, resveratrol, AT-7519 and olomoucine. Activated by CDK5R1 (p35) and CDK5R2 (p39) during the development of the nervous system; degradation of CDK5R1 (p35) and CDK5R2 (p39) by proteasome result in down regulation of kinase activity, during this process, CDK5 phosphorylates p35 and induces its ubiquitination and subsequent degradation. Kinase activity is mainly determined by the amount of p35 available and subcellular location; reversible association to plasma membrane inhibits activity. Long-term inactivation as well as CDK5R1 (p25)-mediated hyperactivation of CDK5 triggers cell death. The pro-death activity of hyperactivated CDK5 is suppressed by membrane association of CDK5, via myristoylation of p35. Brain-derived neurotrophic factor, glial-derived neurotrophic factor, nerve growth factor (NGF), retinoic acid, laminin and neuregulin promote activity. Neurotoxicity enhances nuclear activity, thus leading to MEF2 phosphorylation and inhibition prior to apoptosis of cortical neurons. Repression by GSTP1 via p25/p35 translocation prevents neurodegeneration. Its function is as follows. Proline-directed serine/threonine-protein kinase essential for neuronal cell cycle arrest and differentiation and may be involved in apoptotic cell death in neuronal diseases by triggering abortive cell cycle re-entry. Interacts with D1 and D3-type G1 cyclins. Phosphorylates SRC, NOS3, VIM/vimentin, p35/CDK5R1, MEF2A, SIPA1L1, SH3GLB1, PXN, PAK1, MCAM/MUC18, SEPT5, SYN1, DNM1, AMPH, SYNJ1, CDK16, RAC1, RHOA, CDC42, TONEBP/NFAT5, MAPT/TAU, MAP1B, histone H1, p53/TP53, HDAC1, APEX1, PTK2/FAK1, huntingtin/HTT, ATM, MAP2, NEFH and NEFM. Regulates several neuronal development and physiological processes including neuronal survival, migration and differentiation, axonal and neurite growth, synaptogenesis, oligodendrocyte differentiation, synaptic plasticity and neurotransmission, by phosphorylating key proteins. Negatively regulates the CACNA1B/CAV2.2 -mediated Ca(2+) release probability at hippocampal neuronal soma and synaptic terminals. Activated by interaction with CDK5R1 (p35) and CDK5R2 (p39), especially in postmitotic neurons, and promotes CDK5R1 (p35) expression in an autostimulation loop. Phosphorylates many downstream substrates such as Rho and Ras family small GTPases (e.g. PAK1, RAC1, RHOA, CDC42) or microtubule-binding proteins (e.g. MAPT/TAU, MAP2, MAP1B), and modulates actin dynamics to regulate neurite growth and/or spine morphogenesis. Also phosphorylates exocytosis associated proteins such as MCAM/MUC18, SEPT5, SYN1, and CDK16/PCTAIRE1 as well as endocytosis associated proteins such as DNM1, AMPH and SYNJ1 at synaptic terminals. In the mature central nervous system (CNS), regulates neurotransmitter movements by phosphorylating substrates associated with neurotransmitter release and synapse plasticity; synaptic vesicle exocytosis, vesicles fusion with the presynaptic membrane, and endocytosis. Promotes cell survival by activating anti-apoptotic proteins BCL2 and STAT3, and negatively regulating of JNK3/MAPK10 activity. Phosphorylation of p53/TP53 in response to genotoxic and oxidative stresses enhances its stabilization by preventing ubiquitin ligase-mediated proteasomal degradation, and induces transactivation of p53/TP53 target genes, thus regulating apoptosis. Phosphorylation of p35/CDK5R1 enhances its stabilization by preventing calpain-mediated proteolysis producing p25/CDK5R1 and avoiding ubiquitin ligase-mediated proteasomal degradation. During aberrant cell-cycle activity and DNA damage, p25/CDK5 activity elicits cell-cycle activity and double-strand DNA breaks that precedes neuronal death by deregulating HDAC1. DNA damage triggered phosphorylation of huntingtin/HTT in nuclei of neurons protects neurons against polyglutamine expansion as well as DNA damage mediated toxicity. Phosphorylation of PXN reduces its interaction with PTK2/FAK1 in matrix-cell focal adhesions (MCFA) during oligodendrocytes (OLs) differentiation. Negative regulator of Wnt/beta-catenin signaling pathway. Activator of the GAIT (IFN-gamma-activated inhibitor of translation) pathway, which suppresses expression of a post-transcriptional regulon of proinflammatory genes in myeloid cells; phosphorylates the linker domain of glutamyl-prolyl tRNA synthetase (EPRS) in a IFN-gamma-dependent manner, the initial event in assembly of the GAIT complex. Phosphorylation of SH3GLB1 is required for autophagy induction in starved neurons. Phosphorylation of TONEBP/NFAT5 in response to osmotic stress mediates its rapid nuclear localization. MEF2 is inactivated by phosphorylation in nucleus in response to neurotoxin, thus leading to neuronal apoptosis. APEX1 AP-endodeoxyribonuclease is repressed by phosphorylation, resulting in accumulation of DNA damage and contributing to neuronal death. NOS3 phosphorylation down regulates NOS3-derived nitrite (NO) levels. SRC phosphorylation mediates its ubiquitin-dependent degradation and thus leads to cytoskeletal reorganization. May regulate endothelial cell migration and angiogenesis via the modulation of lamellipodia formation. Involved in dendritic spine morphogenesis by mediating the EFNA1-EPHA4 signaling. The complex p35/CDK5 participates in the regulation of the circadian clock by modulating the function of CLOCK protein: phosphorylates CLOCK at 'Thr-451' and 'Thr-461' and regulates the transcriptional activity of the CLOCK-BMAL1 heterodimer in association with altered stability and subcellular distribution. The sequence is that of Cyclin-dependent kinase 5 from Rattus norvegicus (Rat).